The sequence spans 187 residues: ATP synthase subunit delta (187 aa).

It belongs to the ATPase delta chain family. F-type ATPases have 2 components, F(1) - the catalytic core - and F(0) - the membrane proton channel. F(1) has five subunits: alpha(3), beta(3), gamma(1), delta(1), epsilon(1). F(0) has three main subunits: a(1), b(2) and c(10-14). The alpha and beta chains form an alternating ring which encloses part of the gamma chain. F(1) is attached to F(0) by a central stalk formed by the gamma and epsilon chains, while a peripheral stalk is formed by the delta and b chains.

It localises to the cell inner membrane. Its function is as follows. F(1)F(0) ATP synthase produces ATP from ADP in the presence of a proton or sodium gradient. F-type ATPases consist of two structural domains, F(1) containing the extramembraneous catalytic core and F(0) containing the membrane proton channel, linked together by a central stalk and a peripheral stalk. During catalysis, ATP synthesis in the catalytic domain of F(1) is coupled via a rotary mechanism of the central stalk subunits to proton translocation. This protein is part of the stalk that links CF(0) to CF(1). It either transmits conformational changes from CF(0) to CF(1) or is implicated in proton conduction. The sequence is that of ATP synthase subunit delta from Leptospira biflexa serovar Patoc (strain Patoc 1 / Ames).